We begin with the raw amino-acid sequence, 201 residues long: MELLCIDSKEKVKISEKIFGQKFNESLVHQVVRSYRITKRQGTSAQKSRSEVIGSGKKPWRQKGTGRARAGSVKSPIWRSGGVTFAKKTRDFKHKINKKMYKNALKSIFSELCRQNRILIVKNFFVKSEKTKLLKKKLNEMNLENVLIISKTIDKNLVLSSRNLNKVHVCFPININPINLISFKKTIITIDAIKIIEEILT.

The disordered stretch occupies residues 39–72; the sequence is KRQGTSAQKSRSEVIGSGKKPWRQKGTGRARAGS.

It belongs to the universal ribosomal protein uL4 family. As to quaternary structure, part of the 50S ribosomal subunit.

In terms of biological role, one of the primary rRNA binding proteins, this protein initially binds near the 5'-end of the 23S rRNA. It is important during the early stages of 50S assembly. It makes multiple contacts with different domains of the 23S rRNA in the assembled 50S subunit and ribosome. Forms part of the polypeptide exit tunnel. This Wigglesworthia glossinidia brevipalpis protein is Large ribosomal subunit protein uL4.